Reading from the N-terminus, the 79-residue chain is Small ribosomal subunit protein bS18 (79 aa).

As to quaternary structure, part of the 30S ribosomal subunit. Forms a tight heterodimer with protein bS6. In terms of processing, both N-terminus methionine truncation and retention have been observed for this protein. Post-translationally, may be methylated up to 6 times, on undetermined residues.

In terms of biological role, binds as a heterodimer with protein bS6 to the central domain of the 16S rRNA, where it helps stabilize the platform of the 30S subunit. This Rhodopseudomonas palustris (strain ATCC BAA-98 / CGA009) protein is Small ribosomal subunit protein bS18.